A 220-amino-acid polypeptide reads, in one-letter code: Ribosomal RNA small subunit methyltransferase G (220 aa).

S-adenosyl-L-methionine-binding positions include G78, F83, 129-130, and R146; that span reads GE.

The protein belongs to the methyltransferase superfamily. RNA methyltransferase RsmG family.

The protein resides in the cytoplasm. It carries out the reaction guanosine(527) in 16S rRNA + S-adenosyl-L-methionine = N(7)-methylguanosine(527) in 16S rRNA + S-adenosyl-L-homocysteine. Specifically methylates the N7 position of guanine in position 527 of 16S rRNA. The chain is Ribosomal RNA small subunit methyltransferase G from Geobacter metallireducens (strain ATCC 53774 / DSM 7210 / GS-15).